We begin with the raw amino-acid sequence, 372 residues long: Mitogen-activated protein kinase kinase kinase 17 (372 aa).

The region spanning 3-259 (WTRGRILGRG…ATQLLNHPFL (257 aa)) is the Protein kinase domain. ATP is bound by residues 9–17 (LGRGSTATV) and lysine 32. Residue aspartate 126 is the Proton acceptor of the active site. A Phosphoserine modification is found at serine 312.

The protein belongs to the protein kinase superfamily. Ser/Thr protein kinase family. In terms of assembly, binds to MKK3.

It is found in the nucleus. It catalyses the reaction L-seryl-[protein] + ATP = O-phospho-L-seryl-[protein] + ADP + H(+). The enzyme catalyses L-threonyl-[protein] + ATP = O-phospho-L-threonyl-[protein] + ADP + H(+). Component of the abscisic acid (ABA) signaling pathway that may act as ABA signal transducer in the context of abiotic stresses. Triggers MPK7 activation in a MKK3-dependent manner. Mediates the ABA-dependent activation of the MKK3-MPK7 module. This Arabidopsis thaliana (Mouse-ear cress) protein is Mitogen-activated protein kinase kinase kinase 17.